The following is a 199-amino-acid chain: 7-methyl-GTP pyrophosphatase (199 aa).

Aspartate 74 (proton acceptor) is an active-site residue.

The protein belongs to the Maf family. YceF subfamily. It depends on a divalent metal cation as a cofactor.

The protein resides in the cytoplasm. The catalysed reaction is N(7)-methyl-GTP + H2O = N(7)-methyl-GMP + diphosphate + H(+). Its function is as follows. Nucleoside triphosphate pyrophosphatase that hydrolyzes 7-methyl-GTP (m(7)GTP). May have a dual role in cell division arrest and in preventing the incorporation of modified nucleotides into cellular nucleic acids. This chain is 7-methyl-GTP pyrophosphatase, found in Cupriavidus pinatubonensis (strain JMP 134 / LMG 1197) (Cupriavidus necator (strain JMP 134)).